The sequence spans 549 residues: Probable protein kinase UbiB (549 aa).

The Protein kinase domain maps to 123–501; that stretch reads DFNDTPLASA…QQKSHKSNYL (379 aa). ATP-binding positions include 129–137 and Lys152; that span reads LASASISQV. The active-site Proton acceptor is the Asp287. The next 2 membrane-spanning stretches (helical) occupy residues 498 to 518 and 519 to 539; these read SNYL…LFTQ and IVTL…WAIG.

It belongs to the ABC1 family. UbiB subfamily.

It localises to the cell inner membrane. The protein operates within cofactor biosynthesis; ubiquinone biosynthesis [regulation]. Is probably a protein kinase regulator of UbiI activity which is involved in aerobic coenzyme Q (ubiquinone) biosynthesis. This is Probable protein kinase UbiB from Shewanella frigidimarina (strain NCIMB 400).